A 207-amino-acid chain; its full sequence is Protein ERP4 (207 aa).

An N-terminal signal peptide occupies residues 1-21; the sequence is MRVFTLIAILFSSSLLTHAFS. Over 22–174 the chain is Lumenal; sequence SNYAPVGISL…TVSSTESRLT (153 aa). One can recognise a GOLD domain in the interval 36–118; sequence KECLYYDLSS…PKKVEITLEK (83 aa). Residues 175 to 195 traverse the membrane as a helical segment; it reads WLSLLIMGVMVGISIVQALII. The Cytoplasmic portion of the chain corresponds to 196-207; sequence QFFFTSRQKNYV.

It belongs to the EMP24/GP25L family.

Its subcellular location is the endoplasmic reticulum membrane. In terms of biological role, involved in vesicular protein trafficking. The sequence is that of Protein ERP4 (ERP4) from Saccharomyces cerevisiae (strain ATCC 204508 / S288c) (Baker's yeast).